Consider the following 3508-residue polypeptide: WD repeat and FYVE domain-containing protein 3 (3508 aa).

Phosphoserine is present on residues Ser-1942 and Ser-2277. Disordered regions lie at residues 2279–2303 and 2441–2504; these read FGLS…SPSP and SSEG…EKTD. The interval 2284–2963 is sufficient for translocalization to p62 bodies/ALIS; it reads LTGSRRNRKE…PHPPKRVRSR (680 aa). Residues 2450–2459 are compositionally biased toward basic and acidic residues; it reads EPEHGEDTIA. At Ser-2474 the chain carries Phosphoserine. A BEACH-type PH domain is found at 2513 to 2638; that stretch reads EEGEKIQHMY…IRNKVYQRFL (126 aa). The segment at 2568–3508 is interaction with SQSTM1; the sequence is MHEPIIPRGA…RGAEDGPRNC (941 aa). One can recognise a BEACH domain in the interval 2665 to 2958; it reads GLLSTLVGEK…QLFKKPHPPK (294 aa). The tract at residues 2963–3508 is interaction with ATG5; that stretch reads RLNGDNIGIS…RGAEDGPRNC (546 aa). WD repeat units lie at residues 3059-3097, 3107-3146, 3149-3188, and 3192-3236; these read SEWG…EKAK, GHTD…FLTQ, GHRA…VSVN, and GRSQ…VPET. Residues 3254–3317 form a disordered region; it reads AQIGQQAQDD…SGSDDSRRWS (64 aa). Residues 3261 to 3272 are compositionally biased toward acidic residues; the sequence is QDDDSSDSETEE. Ser-3317 and Ser-3321 each carry phosphoserine. Residues 3326–3331 carry the LIR motif; the sequence is DGFIFV. The WD 5 repeat unit spans residues 3390-3429; that stretch reads THPAEVTALGVSKDHSRILVGDSRGRVFSWSVSDQPGRSA. The FYVE-type zinc finger occupies 3436–3496; it reads DEGGDSCSGC…VCQNCYYSLQ (61 aa). Zn(2+) is bound by residues Cys-3442, Cys-3445, Cys-3458, Cys-3461, Cys-3466, Cys-3469, Cys-3488, and Cys-3491.

Directly interacts with ATG5 and associates with the ATG12-ATG5-ATG16L complex. Interacts with p62/SQSTM1. Directly interacts with GABARAP, GABARAPL1 and GABARAPL2; the interaction with GABARAP is required for WDFY3 recruitment to MAP1LC3B-positive p62/SQSTM1 bodies. Weakly interacts with MAP1LC3C; this interaction is direct. Does not interact with MAP1LC3A, nor MAP1LC3B. Interacts with TRAF6. Widely expressed, with high levels in the brain (at protein level). In the brain, expressed by both neuronal and non-neuronal cells. Expressed in bones, in the periosteum, cartilage, growth plate, trabeculae of the primary spongiosa, and scattered hematopoietic cells within the medullary cavity. Tends to be expressed at lower levels in the hypertrophic zone compared to trabeculae. Expressed in osteoblasts, osteoclasts and bone-marrow derived macrophages.

Its subcellular location is the nucleus. The protein resides in the cytoplasm. It is found in the cytosol. It localises to the PML body. The protein localises to the membrane. Its subcellular location is the perikaryon. The protein resides in the cell projection. It is found in the axon. Required for selective macroautophagy (aggrephagy). Acts as an adapter protein by linking specific proteins destined for degradation to the core autophagic machinery members, such as the ATG5-ATG12-ATG16L E3-like ligase, SQSTM1 and LC3. Involved in the formation and autophagic degradation of cytoplasmic ubiquitin-containing inclusions (p62 bodies, ALIS/aggresome-like induced structures). Important for normal brain development. Essential for the formation of axonal tracts throughout the brain and spinal cord, including the formation of the major forebrain commissures. Involved in the ability of neural cells to respond to guidance cues. Required for cortical neurons to respond to the trophic effects of netrin-1/NTN1. Regulates Wnt signaling through the removal of DVL3 aggregates, likely in an autophagy-dependent manner. This process may be important for the determination of brain size during embryonic development. May regulate osteoclastogenesis by acting on the TNFSF11/RANKL - TRAF6 pathway. After cytokinetic abscission, involved in midbody remnant degradation. In vitro strongly binds to phosphatidylinositol 3-phosphate (PtdIns3P). This chain is WD repeat and FYVE domain-containing protein 3 (Wdfy3), found in Mus musculus (Mouse).